We begin with the raw amino-acid sequence, 251 residues long: MSGHSKWATTKHKKAAIDAKRGKLFAKLIKNIEIAARLGGGDPDGNPSLYDAIYKAKKASMPADNIARAVKRGAGAEDGAANYEDIVYEGYAPAGVGLIIECLTDNRNRAAAEVRSTLTKGNGSLATSGSVSFNFERKGQIVVPSEGVDFDKLFETAAEAGAEDVTDDGEVFTVVTGPSDLFTVRKALQEAGFDYDSADQVMQPKNEVELSLEDARKVSKLIDNLDDLDDVQNIYSNWTASDEVMAQLDEE.

The protein belongs to the TACO1 family.

It is found in the cytoplasm. The polypeptide is Probable transcriptional regulatory protein BLD_0450 (Bifidobacterium longum (strain DJO10A)).